Here is a 436-residue protein sequence, read N- to C-terminus: UPF0597 protein YhaM (436 aa).

Belongs to the UPF0597 family.

The sequence is that of UPF0597 protein YhaM from Shigella boydii serotype 18 (strain CDC 3083-94 / BS512).